Reading from the N-terminus, the 336-residue chain is Dihydroorotate dehydrogenase (quinone) (336 aa).

FMN-binding positions include A62 to K66 and T86. K66 serves as a coordination point for substrate. N111–F115 provides a ligand contact to substrate. FMN is bound by residues N139 and N172. N172 serves as a coordination point for substrate. S175 (nucleophile) is an active-site residue. Position 177 (N177) interacts with substrate. FMN is bound by residues K217 and T245. N246–T247 serves as a coordination point for substrate. FMN contacts are provided by residues G268, G297, and Y318–S319.

The protein belongs to the dihydroorotate dehydrogenase family. Type 2 subfamily. As to quaternary structure, monomer. It depends on FMN as a cofactor.

Its subcellular location is the cell membrane. The catalysed reaction is (S)-dihydroorotate + a quinone = orotate + a quinol. It functions in the pathway pyrimidine metabolism; UMP biosynthesis via de novo pathway; orotate from (S)-dihydroorotate (quinone route): step 1/1. In terms of biological role, catalyzes the conversion of dihydroorotate to orotate with quinone as electron acceptor. The sequence is that of Dihydroorotate dehydrogenase (quinone) from Aliivibrio salmonicida (strain LFI1238) (Vibrio salmonicida (strain LFI1238)).